Consider the following 90-residue polypeptide: MAHKKAGGSSRNGRDSAGKRLGVKAFGGEHVIPGNIIARQRGTQWHPGLNVGMGTDHTLFAKVEGRVEFRAKANGRTYVSVLPIAMQAAE.

The segment at 1-20 (MAHKKAGGSSRNGRDSAGKR) is disordered.

Belongs to the bacterial ribosomal protein bL27 family.

This Rhodopseudomonas palustris (strain ATCC BAA-98 / CGA009) protein is Large ribosomal subunit protein bL27.